A 213-amino-acid polypeptide reads, in one-letter code: Orotate phosphoribosyltransferase (213 aa).

Lys-26 lines the 5-phospho-alpha-D-ribose 1-diphosphate pocket. 34-35 serves as a coordination point for orotate; it reads FF. Residues 72–73, Arg-99, Lys-100, Lys-103, His-105, and 124–132 contribute to the 5-phospho-alpha-D-ribose 1-diphosphate site; these read YK and DDVITAGTA. Orotate is bound by residues Thr-128 and Arg-156.

The protein belongs to the purine/pyrimidine phosphoribosyltransferase family. PyrE subfamily. As to quaternary structure, homodimer. Requires Mg(2+) as cofactor.

It carries out the reaction orotidine 5'-phosphate + diphosphate = orotate + 5-phospho-alpha-D-ribose 1-diphosphate. It participates in pyrimidine metabolism; UMP biosynthesis via de novo pathway; UMP from orotate: step 1/2. Its function is as follows. Catalyzes the transfer of a ribosyl phosphate group from 5-phosphoribose 1-diphosphate to orotate, leading to the formation of orotidine monophosphate (OMP). In Pseudomonas syringae pv. tomato (strain ATCC BAA-871 / DC3000), this protein is Orotate phosphoribosyltransferase.